The chain runs to 375 residues: Protein RecA (375 aa).

Residues 1–20 (MPAEMKSAASGSDPRSSGER) are disordered. 79 to 86 (GPESSGKT) contributes to the ATP binding site.

Belongs to the RecA family.

It localises to the cytoplasm. Its function is as follows. Can catalyze the hydrolysis of ATP in the presence of single-stranded DNA, the ATP-dependent uptake of single-stranded DNA by duplex DNA, and the ATP-dependent hybridization of homologous single-stranded DNAs. It interacts with LexA causing its activation and leading to its autocatalytic cleavage. The polypeptide is Protein RecA (Parasynechococcus marenigrum (strain WH8102)).